Consider the following 326-residue polypeptide: MFLLSLLIKIITIILPLLVAVAYMTLAERKVMAAIQRRKGPNIVGVFGLLQPLADGLKLFVKETILPSSANIIIFILAPILTFLLALVSWCVIPLGEGMVYSDINIGVLYILAISSLGVYGIITSGWASNSKYAFLGALRSAAQMVSYEVSIGLILINVLLCSGSLNFTEIVLAQQSIWFVIPLFPIFIMFYISILAETNRAPFDLPEAEAELVAGYNVEYSAMGFALFFLGEYANMILMCSLTTILFFGGWLPPFNLTILYWISPTVWFGLKTTFLLFGFIWIRSSFPRYRYDQLMRLGWKILLPLSLAWVFLISGILLSFNWLP.

Transmembrane regions (helical) follow at residues 1-21 (MFLLSLLIKIITIILPLLVAV), 41-61 (PNIVGVFGLLQPLADGLKLFV), 72-92 (IIIFILAPILTFLLALVSWCV), 104-124 (INIGVLYILAISSLGVYGIIT), 152-172 (IGLILINVLLCSGSLNFTEIV), 177-197 (SIWFVIPLFPIFIMFYISILA), 234-256 (YANMILMCSLTTILFFGGWLPPF), 268-288 (VWFGLKTTFLLFGFIWIRSSF), and 303-323 (ILLPLSLAWVFLISGILLSFN).

The protein belongs to the complex I subunit 1 family.

It localises to the mitochondrion inner membrane. The catalysed reaction is a ubiquinone + NADH + 5 H(+)(in) = a ubiquinol + NAD(+) + 4 H(+)(out). Its function is as follows. Core subunit of the mitochondrial membrane respiratory chain NADH dehydrogenase (Complex I) that is believed to belong to the minimal assembly required for catalysis. Complex I functions in the transfer of electrons from NADH to the respiratory chain. The immediate electron acceptor for the enzyme is believed to be ubiquinone. In Chondrus crispus (Carrageen Irish moss), this protein is NADH-ubiquinone oxidoreductase chain 1 (ND1).